We begin with the raw amino-acid sequence, 148 residues long: Deoxyuridine 5'-triphosphate nucleotidohydrolase (148 aa).

Substrate-binding positions include Arg68–Gly70, Asn81, Thr85–Asp87, and Lys95.

This sequence belongs to the dUTPase family. Requires Mg(2+) as cofactor.

The enzyme catalyses dUTP + H2O = dUMP + diphosphate + H(+). The protein operates within pyrimidine metabolism; dUMP biosynthesis; dUMP from dCTP (dUTP route): step 2/2. Functionally, this enzyme is involved in nucleotide metabolism: it produces dUMP, the immediate precursor of thymidine nucleotides and it decreases the intracellular concentration of dUTP so that uracil cannot be incorporated into DNA. In Caldanaerobacter subterraneus subsp. tengcongensis (strain DSM 15242 / JCM 11007 / NBRC 100824 / MB4) (Thermoanaerobacter tengcongensis), this protein is Deoxyuridine 5'-triphosphate nucleotidohydrolase.